Consider the following 750-residue polypeptide: MEYTHQYSWIIPFIPFPVPMLIGVGLLLFPTATKKIRRIWAFPSILLLTIVMFFSLDLSIHQIQNSSIFQYVWSWTINNDISLEFGYLIDSLTSIMSILITTVGILVLIYSDNYMSHDQGYLRFFAYMTLFNISMLGLVTSSNLIQIYFFWELIGMCSYLLIGFWFTRPIAANACQKAFVTNRVGDFGLLLGILGIYWITGSLEFRDLFQIINNLISKNEMNLFFVTLFALLLFCGSVAKSAQFPLHVWLPDAMEGPTPISALIHAATMVAAGIFLVARLLPLFVLLPQIMNTIAFIGLITVILGATLAIAQKDIKKNLAYSTMSQLGYMMLALGMGSYRGALFHLITHAYSKALLFLGSGSIIHSMEALVGYSPAKSQNMVFMGGLTKHVPITKFFFLVGTLSLCGIPPFACFWSKDEILNDSRLYSPIVAIIACSAAALTAFYMFRIYLLVFEGYLNVHFLNFNGKKNSSFYSISLWGKKQVKLKIKNENFLLVLLKIKKNEITSFFIRKRYLHRVNQNIKNISRLFFGIMDFGMKKTACLYPNESNNTMQFSMLVLVLFTLFVGAIGISFSQGIDLDILSKLLIPFIDLLHKDSKNFVNYYEFFTNATFSLILTFWGIFIASFFYKSVYSYLKNLNLLNLFEKNFIKKKFSDHFQNIIYNWSYNHGYIDVFYEISFISSIRRLVKFNSFFDKKRIDGITNGIGITSFFLGEAIKNVGGGRISSYILLYILDILIFILIYINFVFIRY.

16 helical membrane passes run 9-29 (WIIP…LLLF), 39-59 (IWAF…LDLS), 89-109 (IDSL…LVLI), 125-145 (FAYM…SNLI), 147-167 (IYFF…FWFT), 185-205 (GDFG…SLEF), 219-239 (NEMN…GSVA), 267-287 (ATMV…FVLL), 290-310 (IMNT…TLAI), 327-347 (LGYM…FHLI), 354-374 (ALLF…VGYS), 396-416 (FFFL…CFWS), 427-447 (YSPI…FYMF), 554-574 (FSML…ISFS), 606-626 (FFTN…IASF), and 728-748 (ILLY…FVFI).

Belongs to the complex I subunit 5 family. NDH is composed of at least 16 different subunits, 5 of which are encoded in the nucleus.

The protein localises to the plastid. It localises to the chloroplast thylakoid membrane. The catalysed reaction is a plastoquinone + NADH + (n+1) H(+)(in) = a plastoquinol + NAD(+) + n H(+)(out). The enzyme catalyses a plastoquinone + NADPH + (n+1) H(+)(in) = a plastoquinol + NADP(+) + n H(+)(out). NDH shuttles electrons from NAD(P)H:plastoquinone, via FMN and iron-sulfur (Fe-S) centers, to quinones in the photosynthetic chain and possibly in a chloroplast respiratory chain. The immediate electron acceptor for the enzyme in this species is believed to be plastoquinone. Couples the redox reaction to proton translocation, and thus conserves the redox energy in a proton gradient. The protein is NAD(P)H-quinone oxidoreductase subunit 5, chloroplastic (ndhF) of Phaseolus vulgaris (Kidney bean).